The following is a 2531-amino-acid chain: Neurogenic locus notch homolog protein 1 (2531 aa).

Positions 1-18 (MPRLLTPLLCLTLLPALA) are cleaved as a signal peptide. The Extracellular segment spans residues 19 to 1725 (ARGLRCSQPS…VEPPLPSQLH (1707 aa)). EGF-like domains are found at residues 20–58 (RGLR…QRCQ), 59–99 (DSNP…PLCL), 102–139 (LDNA…KSCQ), and 140–176 (QADP…PTCR). Intrachain disulfides connect C24–C37, C31–C46, C63–C74, C68–C87, C89–C98, C106–C117, C111–C127, C129–C138, C144–C155, C149–C164, C166–C175, C182–C195, C189–C204, C206–C215, C222–C233, C227–C243, C245–C254, C261–C272, C266–C281, C283–C292, C299–C312, C306–C321, C323–C332, C339–C350, C344–C359, C361–C370, C376–C387, C381–C398, C400–C409, C416–C429, C423–C438, and C440–C449. S65 carries an O-linked (Glc...) serine glycan. T73 is a glycosylation site (O-linked (Fuc...) threonine). The O-linked (Fuc...) threonine glycan is linked to T116. The O-linked (Glc...) serine glycan is linked to S146. In terms of domain architecture, EGF-like 5; calcium-binding spans 178–216 (DVNECSQNPGLCRHGGTCHNEIGSYRCACRATHTGPHCE). Residue T194 is glycosylated (O-linked (Fuc...) threonine). Residues 218–255 (PYVPCSPSPCQNGGTCRPTGDTTHECACLPGFAGQNCE) enclose the EGF-like 6 domain. O-linked (Fuc...) threonine; alternate glycosylation occurs at T232. O-linked (GalNAc...) threonine; alternate glycosylation occurs at T232. Residues 257-293 (NVDDCPGNNCKNGGACVDGVNTYNCRCPPEWTGQYCT) enclose the EGF-like 7; calcium-binding domain. In terms of domain architecture, EGF-like 8; calcium-binding spans 295 to 333 (DVDECQLMPNACQNGGTCHNTHGGYNCVCVNGWTGEDCS). O-linked (Fuc...) threonine glycosylation is present at T311. One can recognise an EGF-like 9; calcium-binding domain in the interval 335 to 371 (NIDDCASAACFQGATCHDRVASFYCECPHGRTGLLCH). O-linked (Glc...) serine glycosylation is present at S341. T349 carries an O-linked (Fuc...) threonine glycan. Residues 372-410 (LNDACISNPCNEGSNCDTNPVNGKAICTCPSGYTGPACS) form the EGF-like 10; calcium-binding domain. S378 carries an O-linked (Glc...) serine glycan. In terms of domain architecture, EGF-like 11; calcium-binding spans 412 to 450 (DVDECALGANPCEHAGKCLNTLGSFECQCLQGYTGPRCE). The segment at 420–421 (AN) is interaction with DLL4. Ca(2+) contacts are provided by T432 and S435. The O-linked (Glc...) serine glycan is linked to S435. The interval 448 to 452 (RCEID) is interaction with DLL4. Residues D452, V453, and E455 each contribute to the Ca(2+) site. Positions 452–488 (DVNECISNPCQNDATCLDQIGEFQCICMPGYEGVYCE) constitute an EGF-like 12; calcium-binding domain. Disulfide bonds link C456–C467, C461–C476, and C478–C487. An O-linked (Glc...) serine glycan is attached at S458. O-linked (Fuc...) threonine glycosylation occurs at T466. Positions 469 and 470 each coordinate Ca(2+). Positions 490, 491, and 493 each coordinate Ca(2+). The region spanning 490 to 526 (NTDECASSPCLHNGHCMDKINEFQCQCPKGFNGHLCQ) is the EGF-like 13; calcium-binding domain. Disulfide bonds link C494–C505, C499–C514, C516–C525, C532–C543, C537–C552, C554–C563, C570–C580, C575–C589, C591–C600, C607–C618, C612–C627, C629–C638, C645–C655, C650–C664, C666–C675, C682–C693, C687–C702, C704–C713, C720–C730, C725–C739, C741–C750, C757–C768, C762–C777, C779–C788, C795–C806, C800–C815, C817–C826, C833–C844, C838–C855, C857–C866, C873–C884, C878–C893, C895–C904, C911–C922, C916–C931, C933–C942, C949–C960, C954–C969, C971–C980, C987–C998, C992–C1007, C1009–C1018, C1025–C1036, C1030–C1045, C1047–C1056, C1063–C1074, C1068–C1083, C1085–C1094, C1101–C1122, C1116–C1131, C1133–C1142, C1149–C1160, C1154–C1169, C1171–C1180, C1187–C1198, C1192–C1207, C1209–C1218, C1225–C1244, C1238–C1253, C1255–C1264, C1271–C1284, C1276–C1293, C1295–C1304, C1311–C1322, C1316–C1334, C1336–C1345, C1352–C1363, C1357–C1372, C1374–C1383, C1391–C1403, C1397–C1414, C1416–C1425, C1449–C1472, C1454–C1467, and C1463–C1479. O-linked (Glc...) serine glycosylation is present at S496. D507 and K508 together coordinate Ca(2+). An EGF-like 14; calcium-binding domain is found at 528–564 (DVDECASTPCKNGAKCLDGPNTYTCVCTEGYTGTHCE). A glycan (O-linked (Glc...) serine) is linked at S534. In terms of domain architecture, EGF-like 15; calcium-binding spans 566-601 (DIDECDPDPCHYGSCKDGVATFTCLCQPGYTGHHCE). The EGF-like 16; calcium-binding domain maps to 603-639 (NINECHSQPCRHGGTCQDRDNSYLCLCLKGTTGPNCE). Residue S609 is glycosylated (O-linked (Glc...) serine). A glycan (O-linked (Fuc...) threonine) is linked at T617. Residues 641–676 (NLDDCASNPCDSGTCLDKIDGYECACEPGYTGSMCN) form the EGF-like 17; calcium-binding domain. A glycan (O-linked (Glc...) serine) is linked at S647. In terms of domain architecture, EGF-like 18; calcium-binding spans 678-714 (NIDECAGSPCHNGGTCEDGIAGFTCRCPEGYHDPTCL). Residue T692 is glycosylated (O-linked (Fuc...) threonine). An EGF-like 19; calcium-binding domain is found at 716–751 (EVNECNSNPCIHGACRDGLNGYKCDCAPGWSGTNCD). An O-linked (Glc...) serine glycan is attached at S722. The region spanning 753 to 789 (NNNECESNPCVNGGTCKDMTSGYVCTCREGFSGPNCQ) is the EGF-like 20; calcium-binding domain. The O-linked (Glc...) serine glycan is linked to S759. Residue T767 is glycosylated (O-linked (Fuc...) threonine). S784 carries O-linked (GlcNAc) serine glycosylation. Residues 791 to 827 (NINECASNPCLNQGTCIDDVAGYKCNCPLPYTGATCE) enclose the EGF-like 21; calcium-binding domain. The O-linked (Glc...) serine glycan is linked to S797. T805 is a glycosylation site (O-linked (Fuc...) threonine). The region spanning 829 to 867 (VLAPCATSPCKNSGVCKESEDYESFSCVCPTGWQGQTCE) is the EGF-like 22 domain. One can recognise an EGF-like 23; calcium-binding domain in the interval 869–905 (DINECVKSPCRHGASCQNTNGSYRCLCQAGYTGRNCE). The N-linked (GlcNAc...) asparagine glycan is linked to N888. A glycan (O-linked (GlcNAc) threonine) is linked at T900. Residues 907–943 (DIDDCRPNPCHNGGSCTDGINTAFCDCLPGFQGAFCE) enclose the EGF-like 24 domain. An O-linked (Fuc) serine glycan is attached at S921. Residues 945 to 981 (DINECASNPCQNGANCTDCVDSYTCTCPVGFNGIHCE) form the EGF-like 25; calcium-binding domain. The O-linked (Glc...) serine glycan is linked to S951. The N-linked (GlcNAc...) asparagine glycan is linked to N959. One can recognise an EGF-like 26 domain in the interval 983-1019 (NTPDCTESSCFNGGTCVDGINSFTCLCPPGFTGSYCQ). T997 is a glycosylation site (O-linked (Fuc...) threonine). Positions 1021 to 1057 (DVNECDSRPCLHGGTCQDSYGTYKCTCPQGYTGLNCQ) constitute an EGF-like 27; calcium-binding domain. Residue S1027 is glycosylated (O-linked (Glc...) serine). T1035 carries O-linked (Fuc...) threonine glycosylation. 2 EGF-like domains span residues 1059 to 1095 (LVRW…VNCD) and 1097 to 1143 (LSVS…SYCE). S1065 is a glycosylation site (O-linked (Glc...) serine). Positions 1145–1181 (EVDECSPNPCQNGATCTDYLGGFSCKCVAGYHGSNCS) constitute an EGF-like 30; calcium-binding domain. Residue T1159 is glycosylated (O-linked (Fuc...) threonine). N1179 is a glycosylation site (N-linked (GlcNAc...) asparagine). The region spanning 1183-1219 (EINECLSQPCQNGGTCIDLTNSYKCSCPRGTQGVHCE) is the EGF-like 31; calcium-binding domain. S1189 is a glycosylation site (O-linked (Glc...) serine). Residue T1197 is glycosylated (O-linked (Fuc...) threonine). Positions 1221–1265 (NVDDCHPPLDPASRSPKCFNNGTCVDQVGGYTCTCPPGFVGERCE) constitute an EGF-like 32; calcium-binding domain. N1241 is a glycosylation site (N-linked (GlcNAc...) asparagine). EGF-like domains lie at 1267 to 1305 (DVNE…RRCE), 1307 to 1346 (VING…ATCE), 1348 to 1384 (DART…PECQ), and 1387 to 1426 (ASSP…LLCH). S1273 carries O-linked (Glc...) serine glycosylation. T1362 carries O-linked (Fuc...) threonine glycosylation. The O-linked (GlcNAc...) threonine glycan is linked to T1379. T1402 is a glycosylation site (O-linked (Fuc...) threonine; alternate). T1402 is a glycosylation site (O-linked (GalNAc...) threonine; alternate). LNR repeat units lie at residues 1449 to 1489 (CELP…PWKN), 1490 to 1531 (CTQS…CNPL), and 1532 to 1571 (YDQY…RLAA). Residues D1457, N1460, D1475, and D1478 each contribute to the Ca(2+) site. A glycan (N-linked (GlcNAc...) asparagine) is linked at N1489. Cystine bridges form between C1490/C1514, C1496/C1509, C1505/C1521, C1536/C1549, and C1545/C1561. The N-linked (GlcNAc...) asparagine glycan is linked to N1587. Positions 1718–1750 (PPLPSQLHLMYVAAAAFVLLFFVGCGVLLSRKR) are interaction with PSEN1. A helical membrane pass occupies residues 1726–1746 (LMYVAAAAFVLLFFVGCGVLL). Residues 1747–2531 (SRKRRRQHGQ…QITHIPEAFK (785 aa)) are Cytoplasmic-facing. Residue K1749 forms a Glycyl lysine isopeptide (Lys-Gly) (interchain with G-Cter in ubiquitin) linkage. The segment at 1770 to 1798 (KKKRREPLGEDSVGLKPLKNASDGALMDD) is disordered. T1851 carries the post-translational modification Phosphothreonine. 5 ANK repeats span residues 1917–1946 (TGET…DANI), 1950–1980 (MGRT…DLDA), 1984–2013 (DGTT…DVNA), 2017–2046 (LGKS…NKDM), and 2050–2079 (KEET…NRDI). An HIF1AN-binding region spans residues 1937–1945 (LLEASADAN). At N1945 the chain carries (3S)-3-hydroxyasparagine; by HIF1AN; partial. The HIF1AN-binding stretch occupies residues 2004–2012 (LINSHADVN). N2012 carries the post-translational modification (3S)-3-hydroxyasparagine; by HIF1AN; partial. Disordered regions lie at residues 2140-2185 (KSAT…DSSS), 2382-2428 (QPQN…SLPV), and 2440-2531 (PTSL…EAFK). Residues 2382–2395 (QPQNLQPPSQPHLS) are compositionally biased toward low complexity. Positions 2440–2478 (PTSLPSSMVPPMTTTQFLTPPSQHSYSSSPVDNTPSHQL) are enriched in polar residues. A compositionally biased stretch (low complexity) spans 2488 to 2503 (PSPESPDQWSSSSPHS). Residues 2504 to 2524 (NISDWSEGISSPPTTMPSQIT) are compositionally biased toward polar residues.

The protein belongs to the NOTCH family. In terms of assembly, heterodimer of a C-terminal fragment N(TM) and an N-terminal fragment N(EC) which are probably linked by disulfide bonds. Interacts with DNER, DTX1, DTX2 and RBPJ/RBPSUH. Also interacts with MAML1, MAML2 and MAML3 which act as transcriptional coactivators for NOTCH1. Notch 1 intracellular domain interacts with SNW1; the interaction involves multimerized NOTCH1 NICD and is implicated in a formation of an intermediate preactivation complex which associates with DNA-bound CBF-1/RBPJ. The activated membrane-bound form interacts with AAK1 which promotes NOTCH1 stabilization. Forms a trimeric complex with FBXW7 and SGK1. Interacts with HIF1AN. HIF1AN negatively regulates the function of notch intracellular domain (NICD), accelerating myogenic differentiation. Interacts (via NICD) with SNAI1 (via zinc fingers); the interaction induces SNAI1 degradation via MDM2-mediated ubiquitination and inhibits SNAI1-induced cell invasion. Interacts (via NICD) with MDM2A. Interacts (via NICD) with BCL6; the interaction decreases MAML1 recruitment by NOTCH1 NICD on target genes DNA and inhibits NOTCH1 transactivation activity. Interacts with THBS4. Interacts (via the EGF-like repeat region) with CCN3 (via CTCK domain). Interacts (via EGF-like domains) with DLL4 (via N-terminal DSL and MNNL domains). Interacts with ZMIZ1. Interacts (via NICD domain) with MEGF10 (via the cytoplasmic domain). Interacts with DLL1 and JAG1. Interacts (via NICD domain) with PRAG1. Forms a complex with PRAG1, N1ICD and MAML1, in a MAML1-dependent manner. Interacts (via transmembrane region) with PSEN1; the interaction is direct. Interacts with ZFP64. Post-translationally, synthesized in the endoplasmic reticulum as an inactive form which is proteolytically cleaved by a furin-like convertase in the trans-Golgi network before it reaches the plasma membrane to yield an active, ligand-accessible form. Cleavage results in a C-terminal fragment N(TM) and a N-terminal fragment N(EC). Following ligand binding, it is cleaved by ADAM17 to yield a membrane-associated intermediate fragment called notch extracellular truncation (NEXT). Following endocytosis, this fragment is then cleaved by one of the catalytic subunits of gamma-secretase (PSEN1 or PSEN2) to release a Notch-derived peptide containing the intracellular domain (NICD) from the membrane. In terms of processing, phosphorylated. O-linked glycosylation by GALNT11 is involved in determination of left/right symmetry: glycosylation promotes activation of NOTCH1, possibly by promoting cleavage by ADAM17, modulating the balance between motile and immotile (sensory) cilia at the left-right organiser (LRO). O-glycosylated on the EGF-like domains. O-glucosylated at Ser-435 by KDELC1 and KDELC2. Contains both O-linked fucose and O-linked glucose in the EGF-like domains 11, 12 and 13, which are interacting with the residues on DLL4. O-glycosylation at Ser-1027 is only partial. MFNG-, RFNG- and LFNG-mediated modification of O-fucose residues at specific EGF-like domains results in inhibition of its activation by JAG1 and enhancement of its activation by DLL1 via an increased binding to DLL1. Post-translationally, ubiquitinated. Undergoes 'Lys-29'-linked polyubiquitination by ITCH; promotes the lysosomal degradation of non-activated internalized NOTCH1. Deubiquitination by USP12 is required for transport of internalized non-activated receptor from late endosomes to lysosomes for degradation. Monoubiquitination at Lys-1749 is required for activation by gamma-secretase cleavage, it promotes interaction with AAK1, which stabilizes it. Deubiquitination by EIF3F is necessary for nuclear import of activated Notch. In terms of processing, hydroxylated at Asn-1945 and Asn-2012 by HIF1AN. Hydroxylation reduces affinity for HI1AN and may thus indirectly modulate negative regulation of NICD. As to expression, highly expressed in the brain, lung and thymus. Expressed at lower levels in the spleen, bone-marrow, spinal cord, eyes, mammary gland, liver, intestine, skeletal muscle, kidney and heart. In the hair follicle, highly expressed exclusively in the epithelial compartment.

It is found in the cell membrane. It localises to the late endosome membrane. The protein resides in the nucleus. Functionally, functions as a receptor for membrane-bound ligands Jagged-1 (JAG1), Jagged-2 (JAG2) and Delta-1 (DLL1) to regulate cell-fate determination. Upon ligand activation through the released notch intracellular domain (NICD) it forms a transcriptional activator complex with RBPJ/RBPSUH and activates genes of the enhancer of split locus. Affects the implementation of differentiation, proliferation and apoptotic programs. Involved in angiogenesis; negatively regulates endothelial cell proliferation and migration and angiogenic sprouting. Involved in the maturation of both CD4(+) and CD8(+) cells in the thymus. Important for follicular differentiation and possibly cell fate selection within the follicle. During cerebellar development, functions as a receptor for neuronal DNER and is involved in the differentiation of Bergmann glia. Represses neuronal and myogenic differentiation. May play an essential role in postimplantation development, probably in some aspect of cell specification and/or differentiation. May be involved in mesoderm development, somite formation and neurogenesis. May enhance HIF1A function by sequestering HIF1AN away from HIF1A. Required for the THBS4 function in regulating protective astrogenesis from the subventricular zone (SVZ) niche after injury. Involved in determination of left/right symmetry by modulating the balance between motile and immotile (sensory) cilia at the left-right organiser (LRO). The sequence is that of Neurogenic locus notch homolog protein 1 (Notch1) from Mus musculus (Mouse).